The sequence spans 186 residues: Sec-independent protein translocase protein TatB (186 aa).

Residues 1–21 form a helical membrane-spanning segment; it reads MFDIGFSELILLMVLGLVVLG. The interval 162–186 is disordered; that stretch reads LSSYYPPDDIEIAPASKSQSSKTKS. Residues 177–186 are compositionally biased toward polar residues; the sequence is SKSQSSKTKS.

Belongs to the TatB family. As to quaternary structure, the Tat system comprises two distinct complexes: a TatABC complex, containing multiple copies of TatA, TatB and TatC subunits, and a separate TatA complex, containing only TatA subunits. Substrates initially bind to the TatABC complex, which probably triggers association of the separate TatA complex to form the active translocon.

Its subcellular location is the cell inner membrane. Its function is as follows. Part of the twin-arginine translocation (Tat) system that transports large folded proteins containing a characteristic twin-arginine motif in their signal peptide across membranes. Together with TatC, TatB is part of a receptor directly interacting with Tat signal peptides. TatB may form an oligomeric binding site that transiently accommodates folded Tat precursor proteins before their translocation. The polypeptide is Sec-independent protein translocase protein TatB (Haemophilus influenzae (strain 86-028NP)).